The sequence spans 474 residues: Serine/threonine-protein kinase ksp1 (474 aa).

Positions Tyr9 to Thr280 constitute a Protein kinase domain. ATP-binding positions include Leu15–Val23 and Lys43. Catalysis depends on Asp137, which acts as the Proton acceptor. The interval Val345 to Ser373 is disordered. The segment covering Ser350–Pro363 has biased composition (low complexity). Phosphoserine occurs at positions 353, 354, 357, 378, 404, and 413.

It belongs to the protein kinase superfamily. Ser/Thr protein kinase family.

Its subcellular location is the cytoplasm. The protein resides in the nucleus. The enzyme catalyses L-seryl-[protein] + ATP = O-phospho-L-seryl-[protein] + ADP + H(+). It carries out the reaction L-threonyl-[protein] + ATP = O-phospho-L-threonyl-[protein] + ADP + H(+). The chain is Serine/threonine-protein kinase ksp1 (ksp1) from Schizosaccharomyces pombe (strain 972 / ATCC 24843) (Fission yeast).